The sequence spans 142 residues: Large ribosomal subunit protein uL13 (142 aa).

It belongs to the universal ribosomal protein uL13 family. In terms of assembly, part of the 50S ribosomal subunit.

Functionally, this protein is one of the early assembly proteins of the 50S ribosomal subunit, although it is not seen to bind rRNA by itself. It is important during the early stages of 50S assembly. The chain is Large ribosomal subunit protein uL13 from Vibrio cholerae serotype O1 (strain M66-2).